The chain runs to 633 residues: Early transcription factor 70 kDa subunit (633 aa).

In terms of domain architecture, Helicase ATP-binding spans 32–185; that stretch reads RTILDHNESV…SNIISIMSDE (154 aa). 45 to 52 is an ATP binding site; the sequence is HIMGSGKT. The DEXH box signature appears at 135–138; it reads DEAH. The 180-residue stretch at 326 to 505 folds into the Helicase C-terminal domain; sequence KFKYFIDTIG…TLPFDIKKLL (180 aa).

Belongs to the helicase family. VETF subfamily. In terms of assembly, heterodimer of a 70 kDa and a 82 kDa subunit. Part of the early transcription complex composed of ETF, RAP94, and the DNA-directed RNA polymerase.

It is found in the virion. Functionally, acts with RNA polymerase to initiate transcription from early gene promoters. Is recruited by the RPO-associated protein of 94 kDa (RAP94) to form the early transcription complex, which also contains the core RNA polymerase. ETF heterodimer binds to early gene promoters. In Vertebrata (FPV), this protein is Early transcription factor 70 kDa subunit (VETFS).